We begin with the raw amino-acid sequence, 354 residues long: Peptide chain release factor 1 (354 aa).

The residue at position 230 (Gln230) is an N5-methylglutamine.

Belongs to the prokaryotic/mitochondrial release factor family. In terms of processing, methylated by PrmC. Methylation increases the termination efficiency of RF1.

Its subcellular location is the cytoplasm. Its function is as follows. Peptide chain release factor 1 directs the termination of translation in response to the peptide chain termination codons UAG and UAA. This is Peptide chain release factor 1 from Pelobacter propionicus (strain DSM 2379 / NBRC 103807 / OttBd1).